The sequence spans 355 residues: Probable L-aspartate decarboxylase (355 aa).

Lys-210 carries the N6-(pyridoxal phosphate)lysine modification.

It belongs to the group II decarboxylase family. MfnA subfamily. Pyridoxal 5'-phosphate is required as a cofactor.

The enzyme catalyses L-aspartate + H(+) = beta-alanine + CO2. Its pathway is cofactor biosynthesis; coenzyme A biosynthesis. Catalyzes the decarboxylation of L-aspartate to produce beta-alanine. This is Probable L-aspartate decarboxylase from Halobacterium salinarum (strain ATCC 29341 / DSM 671 / R1).